We begin with the raw amino-acid sequence, 670 residues long: Solute carrier organic anion transporter family member 1A1 (670 aa).

The Cytoplasmic segment spans residues 1-20 (MEETEKKVATQEGRFFSKMK). The helical transmembrane segment at 21 to 40 (VFLMSLTCAYLAKSLSGVYM) threads the bilayer. The Extracellular portion of the chain corresponds to 41 to 59 (NSMLTQIERQFGIPTSVVG). The chain crosses the membrane as a helical span at residues 60–80 (FITGSFEIGNLLLIVFVSYFG). Residues 81–86 (RKLHRP) are Cytoplasmic-facing. A helical membrane pass occupies residues 87 to 111 (IIIGVGCVVMGLGCFLMASPHFLMG). At 112 to 155 (RYKYETTISPTSNLSSNSFLCIENRTQTLKPTQDPTECVKEIKS) the chain is on the extracellular side. N-linked (GlcNAc...) asparagine glycans are attached at residues N124 and N135. A helical transmembrane segment spans residues 156–184 (LMWIYVLIGNTMRGIGETPIMPLGISYIE). At 185–203 (DFAKSENSPLYIGILEMGK) the chain is on the cytoplasmic side. Residues 204 to 224 (IVGPIIGLLLGSFFARVYVDI) traverse the membrane as a helical segment. The Extracellular portion of the chain corresponds to 225–242 (GSVNTDDLTITPTDTRWV). A helical membrane pass occupies residues 243 to 267 (GAWWIGFLVCAGVNILTSIPFFFFP). Topologically, residues 268–311 (KTLPKKELQDNVDVTKYEKVEKHRERAKKENLGITKDFLPFMKS) are cytoplasmic. The chain crosses the membrane as a helical span at residues 312–333 (LCCNPIYMLFSLTSVLQINGFA). Residues 334–353 (STFTFLPKYLEQQYGKSTSE) lie on the Extracellular side of the membrane. Residues 354–377 (AVFLIGVYSLPPVCLGYLISGFIM) traverse the membrane as a helical segment. The Cytoplasmic portion of the chain corresponds to 378 to 381 (KKFK). A helical membrane pass occupies residues 382-405 (ITVKKAAYIAFGLSLSEYFIFLCN). Residues 406 to 513 (YLLTCDNFPV…PECDNKLQYF (108 aa)) are Extracellular-facing. One can recognise a Kazal-like domain in the interval 433-488 (KNVLADCNTRCSCLTDTWDPVCGDNGLAYMSACLAGCEKSVGTGTNMVFQNCSCIG). Disulfide bonds link C439/C469, C445/C465, and C454/C486. N-linked (GlcNAc...) asparagine glycans are attached at residues N483 and N492. Residues 514-536 (LIKSVFSSFIFSLAAIPGYMVLL) form a helical membrane-spanning segment. Residues 537–545 (RCVKSEEKS) are Cytoplasmic-facing. A helical transmembrane segment spans residues 546 to 571 (IGVGLHAFFIRLLAGIPAPVYFGALI). Topologically, residues 572–605 (DRTCLHWGTLKCGQPGACRMYDINRFRHIYLGLP) are extracellular. A helical transmembrane segment spans residues 606–623 (AAVRGSSFLPAVFILILM). At 624–670 (RKFHFPGDIHSPDTELAEMKLTEKESECTDVCRSPKVENDGELKTKL) the chain is on the cytoplasmic side. S634 bears the Phosphoserine mark.

Belongs to the organo anion transporter (TC 2.A.60) family. In terms of assembly, binds to PDZK1. Interaction with PDZK1 is required for expression on hepatocyte surface. Highly expressed in liver, and at lower levels in kidney. Not detected in other tissues.

It is found in the basolateral cell membrane. It catalyses the reaction estrone 3-sulfate(out) + hydrogencarbonate(in) = estrone 3-sulfate(in) + hydrogencarbonate(out). It carries out the reaction taurocholate(out) + hydrogencarbonate(in) = taurocholate(in) + hydrogencarbonate(out). The enzyme catalyses L-thyroxine(out) = L-thyroxine(in). The catalysed reaction is prostaglandin E2(out) = prostaglandin E2(in). It catalyses the reaction 17beta-estradiol 17-O-(beta-D-glucuronate)(out) = 17beta-estradiol 17-O-(beta-D-glucuronate)(in). It carries out the reaction dehydroepiandrosterone 3-sulfate(out) = dehydroepiandrosterone 3-sulfate(in). Its function is as follows. Mediates the Na(+)-independent transport of organic anions such as steroid sulfate conjugates (dehydroepiandrosterone sulfate (DHEAS), 17-beta-glucuronosyl estradiol, estrone-3-sulfate), conjugated (taurocholate) and unconjugated (cholate) bile acids, prostaglandin E2 (PGE2) and L-thyroxine T4. Also capable of transporting sulfobromophthalein (BSP), ouabain and gadoxetate. Hydrogencarbonate/HCO3(-) acts as the probable counteranion that exchanges for organic anions. Shows a pH-sensitive substrate specificity which may be ascribed to the protonation state of the binding site and leads to a stimulation of substrate transport in an acidic microenvironment. This is Solute carrier organic anion transporter family member 1A1 from Mus musculus (Mouse).